A 102-amino-acid chain; its full sequence is MYIGIAHYLTVSAIMFTVGIFGIFLNRKNVIIILMSIELILLSVNLNFVAFSAFLHDLVGQIFALFILTVAAAEAAIGLAILVVFFRNRGSIAVEDVNVMKG.

A run of 3 helical transmembrane segments spans residues 5-25 (IAHY…GIFL), 31-51 (IIIL…FVAF), and 66-86 (FILT…VVFF).

Belongs to the complex I subunit 4L family. As to quaternary structure, NDH-1 is composed of 14 different subunits. Subunits NuoA, H, J, K, L, M, N constitute the membrane sector of the complex.

It is found in the cell inner membrane. The enzyme catalyses a quinone + NADH + 5 H(+)(in) = a quinol + NAD(+) + 4 H(+)(out). NDH-1 shuttles electrons from NADH, via FMN and iron-sulfur (Fe-S) centers, to quinones in the respiratory chain. The immediate electron acceptor for the enzyme in this species is believed to be ubiquinone. Couples the redox reaction to proton translocation (for every two electrons transferred, four hydrogen ions are translocated across the cytoplasmic membrane), and thus conserves the redox energy in a proton gradient. The chain is NADH-quinone oxidoreductase subunit K from Bartonella bacilliformis (strain ATCC 35685 / KC583 / Herrer 020/F12,63).